A 390-amino-acid chain; its full sequence is uncharacterized protein (390 aa).

Helical transmembrane passes span 7–27, 35–55, 77–97, 101–121, 128–148, 161–181, 203–223, 238–258, 281–301, 335–355, and 357–377; these read IYIL…ISGI, LGIT…VYAL, LGLF…GWFI, IIMA…AAKI, GSAI…GVPL, VFGA…FTLP, VAMG…AYTY, LLSG…KFGG, LILL…LILW, MQFA…NVSL, and SITW…LLIF.

Belongs to the major facilitator superfamily.

Its subcellular location is the cell membrane. This is an uncharacterized protein from Bacillus subtilis (strain 168).